Consider the following 511-residue polypeptide: Keratin, type II cytoskeletal 72 (511 aa).

Residues 1 to 124 (MSRQLTHFPR…DPEIQRVRAQ (124 aa)) form a head region. Residues 125–160 (EREQIKALNNKFASFIDKVRFLEQQNQVLETKWNLL) form a coil 1A region. The 314-residue stretch at 125–438 (EREQIKALNN…KLLESEECRM (314 aa)) folds into the IF rod domain. Positions 161–179 (QQLDLNNCRKNLEPIYEGY) are linker 1. Residues 180–271 (ISNLQKQLEM…CLYEGEITQI (92 aa)) are coil 1B. Residues 272–295 (QSHISDTSIVLSMDNNRDLDLDSI) form a linker 12 region. Residues 296-434 (IAEVRAQYEE…ATYRKLLESE (139 aa)) form a coil 2 region. Residues 435-511 (ECRMSGEYPN…SSCATKKASR (77 aa)) form a tail region. The disordered stretch occupies residues 486 to 511 (GSCGSELKDPLAKTSGSSCATKKASR).

Belongs to the intermediate filament family. As to quaternary structure, heterotetramer of two type I and two type II keratins. Highly expressed in hair follicles from scalp and eyebrow. Also expressed in palmoplantar epidermis. Not expressed in face skin despite the presence of fine hairs histologically. In hair, it is specifically present in the inner root sheath (IRS) of the hair follicle. Present in the IRS cuticle, but not in Henle or Huxley layers of the IRS. In the IRS cuticle, its presence is delayed up to the height of the apex of the dermal papilla (at protein level).

Functionally, has a role in hair formation. Specific component of keratin intermediate filaments in the inner root sheath (IRS) of the hair follicle. This is Keratin, type II cytoskeletal 72 (KRT72) from Homo sapiens (Human).